A 293-amino-acid chain; its full sequence is 3-methyl-2-oxobutanoate hydroxymethyltransferase (293 aa).

A disordered region spans residues 1–29; that stretch reads MTAAHDRSENQPGRPGGETTAPYGSAPRR. Mg(2+) is bound by residues D73 and D112. 3-methyl-2-oxobutanoate contacts are provided by residues 73–74, D112, and K142; that span reads DS. E144 serves as a coordination point for Mg(2+). Catalysis depends on E210, which acts as the Proton acceptor.

The protein belongs to the PanB family. As to quaternary structure, homodecamer; pentamer of dimers. Requires Mg(2+) as cofactor.

It localises to the cytoplasm. It catalyses the reaction 3-methyl-2-oxobutanoate + (6R)-5,10-methylene-5,6,7,8-tetrahydrofolate + H2O = 2-dehydropantoate + (6S)-5,6,7,8-tetrahydrofolate. The protein operates within cofactor biosynthesis; (R)-pantothenate biosynthesis; (R)-pantoate from 3-methyl-2-oxobutanoate: step 1/2. Its function is as follows. Catalyzes the reversible reaction in which hydroxymethyl group from 5,10-methylenetetrahydrofolate is transferred onto alpha-ketoisovalerate to form ketopantoate. In Saccharopolyspora erythraea (strain ATCC 11635 / DSM 40517 / JCM 4748 / NBRC 13426 / NCIMB 8594 / NRRL 2338), this protein is 3-methyl-2-oxobutanoate hydroxymethyltransferase.